Here is a 423-residue protein sequence, read N- to C-terminus: D-tagatose-1,6-bisphosphate aldolase subunit GatZ (423 aa).

It belongs to the GatZ/KbaZ family. GatZ subfamily. Forms a complex with GatY.

The protein operates within carbohydrate metabolism; D-tagatose 6-phosphate degradation; D-glyceraldehyde 3-phosphate and glycerone phosphate from D-tagatose 6-phosphate: step 2/2. In terms of biological role, component of the tagatose-1,6-bisphosphate aldolase GatYZ that is required for full activity and stability of the Y subunit. Could have a chaperone-like function for the proper and stable folding of GatY. When expressed alone, GatZ does not show any aldolase activity. Is involved in the catabolism of galactitol. This Salmonella heidelberg (strain SL476) protein is D-tagatose-1,6-bisphosphate aldolase subunit GatZ.